We begin with the raw amino-acid sequence, 167 residues long: Phospholipase A2 heteromtoxin (167 aa).

Residues W38, G40, and G42 each coordinate Ca(2+). 5 cysteine pairs are disulfide-bonded: C39-C61, C60-C99, C67-C92, C90-C127, and C132-C144. The active site involves H64. D65 provides a ligand contact to Ca(2+). Residues 136–140 constitute a propeptide that is removed on maturation; that stretch reads GRSAR.

Belongs to the phospholipase A2 family. Group III subfamily. Heterodimer composed of a large and a small subunits; disulfide-linked. It depends on Ca(2+) as a cofactor. Expressed by the venom gland.

The protein resides in the secreted. The enzyme catalyses a 1,2-diacyl-sn-glycero-3-phosphocholine + H2O = a 1-acyl-sn-glycero-3-phosphocholine + a fatty acid + H(+). Phospholipase toxin, which catalyzes the calcium-dependent hydrolysis of the 2-acyl groups in 3-sn-phosphoglycerides. Inhibits both skeletal (RYR1) and cardiac (RYR2) ryanodine receptors (calcium release channels). Probably blocks ryanodine receptors by generating a lipid product. This Heterometrus laoticus (Thai giant scorpion) protein is Phospholipase A2 heteromtoxin.